A 950-amino-acid chain; its full sequence is Translation initiation factor IF-2 (950 aa).

4 stretches are compositionally biased toward basic and acidic residues: residues 128–156, 165–186, 200–234, and 291–312; these read KPKVAEPVKKSEPKAAAKAEETKVEKVEA, AEVKTENVADKKEPVVTEEKKK, KRAEDIKKEQAAARPEKKKFDKNRNDRNNRNDNRR, and NRRDRDRKKTDSNRDNTKDGNR. The disordered stretch occupies residues 128-352; it reads KPKVAEPVKK…YQNNQSSNVP (225 aa). Composition is skewed to polar residues over residues 322–336 and 343–352; these read NRNQVRNARNSNWNQ and YQNNQSSNVP. A tr-type G domain is found at 448-619; sequence ERPAVVTIMG…LLVAEVQELK (172 aa). The interval 457 to 464 is G1; that stretch reads GHVDHGKT. 457 to 464 is a GTP binding site; the sequence is GHVDHGKT. Residues 482–486 are G2; that stretch reads GITQH. The interval 503–506 is G3; sequence DTPG. GTP contacts are provided by residues 503 to 507 and 557 to 560; these read DTPGH and NKLD. The G4 stretch occupies residues 557–560; that stretch reads NKLD. A G5 region spans residues 595–597; that stretch reads SAK.

It belongs to the TRAFAC class translation factor GTPase superfamily. Classic translation factor GTPase family. IF-2 subfamily.

It localises to the cytoplasm. In terms of biological role, one of the essential components for the initiation of protein synthesis. Protects formylmethionyl-tRNA from spontaneous hydrolysis and promotes its binding to the 30S ribosomal subunits. Also involved in the hydrolysis of GTP during the formation of the 70S ribosomal complex. The polypeptide is Translation initiation factor IF-2 (infB) (Lactococcus lactis subsp. cremoris (Streptococcus cremoris)).